A 553-amino-acid polypeptide reads, in one-letter code: MVEDLAASYVTLKLENEILQAQVKRLMEENAALQAQIPELQKSGAVKEHEPLRKPSEAQEPPESPEFPAARESQNPWEPPATTEPGEPTKIREPREPSAISELREPPEIKEPQEPPETNESGESSAITEFRGSPEIKEPHLPPKSKEYWGPQELPMVKESWEPPEALDSTAWKPPAVKESQEIQKALESPATQRPQASPRGYDLPAVCEAEPTDNQGTPALKELQSPQLHNPTNDEESQTVPEYQETSSQLEPLEHPPPQETLEPRVPQEPLDPSDAEEFLELSVPEESLEGLIVARTGTEQAQCELEATTLPLEYPLAFSEDFQKLSEFLVQLTSYLRSRGYPTEAALVSFVGSFFSGEAGRMFQPLLDSQPPLVEQFERLLRALQDTFDNPESLEVANQGLPQLRQGEGLAPRYSTRFHLIAQELDLGESTLCIQFQEELASSIQNELSCTSPATNLSDVIIECVTLEEKASGGVDSSSSSSEEENGSEGPPTENQPVQATSNRPHLSEAERARRREGHLCLYCGHPGHFARDCPVKPHRVQQAGNMEARR.

Residues 2–43 (VEDLAASYVTLKLENEILQAQVKRLMEENAALQAQIPELQKS) adopt a coiled-coil conformation. Disordered regions lie at residues 38–274 (PELQ…PLDP) and 474–514 (SGGV…EAER). The span at 45–57 (AVKEHEPLRKPSE) shows a compositional bias: basic and acidic residues. Over residues 58-73 (AQEPPESPEFPAARES) the composition is skewed to low complexity. A compositionally biased stretch (basic and acidic residues) spans 87–113 (EPTKIREPREPSAISELREPPEIKEPQ). The span at 118-127 (TNESGESSAI) shows a compositional bias: polar residues. Over residues 132-147 (GSPEIKEPHLPPKSKE) the composition is skewed to basic and acidic residues. The span at 239–250 (QTVPEYQETSSQ) shows a compositional bias: polar residues. The segment covering 474–483 (SGGVDSSSSS) has biased composition (low complexity). Polar residues predominate over residues 495–507 (TENQPVQATSNRP). The CCHC-type zinc finger occupies 523–537 (CLYCGHPGHFARDCP).

In terms of tissue distribution, expressed in embryonic myogenic progenitor cells, not expressed in adult and aged satellite cells.

The protein resides in the nucleus. Its function is as follows. May function as a transcriptional regulator. Plays a role in postnatal myogenesis, may be involved in the regulation of satellite cells self-renewal. The protein is Retrotransposon Gag-like protein 3 of Mus musculus (Mouse).